The chain runs to 78 residues: uncharacterized protein (78 aa).

This is an uncharacterized protein from Dictyostelium discoideum (Social amoeba).